The sequence spans 213 residues: Ion-translocating oxidoreductase complex subunit E (213 aa).

Helical transmembrane passes span 25-45 (TFGLVLGLCPTLAVTTSVENG), 46-66 (IGMAMGTLFVLVGSNMMVSAI), 77-97 (PVEIIVIATFVTIVDMVMEAF), 100-120 (DLYTSLGVFIPLIVVNCIVIG), 135-155 (IIDALGEGTGFLLVLILIGGI), and 181-201 (AMFMTMSPGAFLTIAVLMTIV).

This sequence belongs to the NqrDE/RnfAE family. The Rnf complex is probably composed of eight subunits, including RnfA, RnfB, RnfC, RnfD, RnfE and RnfG.

It is found in the cell membrane. In terms of biological role, part of a membrane-bound complex that couples electron transfer with translocation of ions across the membrane. Catalyzes Na(+) transport, most probably coupled to electron transfer from reduced ferredoxin to methanophenazine and heterodisulfide reductase. Involved in heterodisulfide reduction during methanogenesis from acetate. In Methanosarcina acetivorans (strain ATCC 35395 / DSM 2834 / JCM 12185 / C2A), this protein is Ion-translocating oxidoreductase complex subunit E.